The chain runs to 294 residues: Acetylglutamate kinase (294 aa).

Residues 60–61, Arg-82, and Asn-186 contribute to the substrate site; that span reads GG.

Belongs to the acetylglutamate kinase family. ArgB subfamily.

It localises to the cytoplasm. It catalyses the reaction N-acetyl-L-glutamate + ATP = N-acetyl-L-glutamyl 5-phosphate + ADP. Its pathway is amino-acid biosynthesis; L-arginine biosynthesis; N(2)-acetyl-L-ornithine from L-glutamate: step 2/4. Functionally, catalyzes the ATP-dependent phosphorylation of N-acetyl-L-glutamate. The polypeptide is Acetylglutamate kinase (Methanospirillum hungatei JF-1 (strain ATCC 27890 / DSM 864 / NBRC 100397 / JF-1)).